Consider the following 83-residue polypeptide: Small ribosomal subunit protein bS20 (83 aa).

This sequence belongs to the bacterial ribosomal protein bS20 family.

Its function is as follows. Binds directly to 16S ribosomal RNA. The polypeptide is Small ribosomal subunit protein bS20 (Leuconostoc citreum (strain KM20)).